The sequence spans 154 residues: Crossover junction endodeoxyribonuclease RuvC (154 aa).

Residues D7, E67, and D139 contribute to the active site. Mg(2+) contacts are provided by D7, E67, and D139.

This sequence belongs to the RuvC family. Homodimer which binds Holliday junction (HJ) DNA. The HJ becomes 2-fold symmetrical on binding to RuvC with unstacked arms; it has a different conformation from HJ DNA in complex with RuvA. In the full resolvosome a probable DNA-RuvA(4)-RuvB(12)-RuvC(2) complex forms which resolves the HJ. The cofactor is Mg(2+).

The protein resides in the cytoplasm. It catalyses the reaction Endonucleolytic cleavage at a junction such as a reciprocal single-stranded crossover between two homologous DNA duplexes (Holliday junction).. Its function is as follows. The RuvA-RuvB-RuvC complex processes Holliday junction (HJ) DNA during genetic recombination and DNA repair. Endonuclease that resolves HJ intermediates. Cleaves cruciform DNA by making single-stranded nicks across the HJ at symmetrical positions within the homologous arms, yielding a 5'-phosphate and a 3'-hydroxyl group; requires a central core of homology in the junction. The consensus cleavage sequence is 5'-(A/T)TT(C/G)-3'. Cleavage occurs on the 3'-side of the TT dinucleotide at the point of strand exchange. HJ branch migration catalyzed by RuvA-RuvB allows RuvC to scan DNA until it finds its consensus sequence, where it cleaves and resolves the cruciform DNA. The sequence is that of Crossover junction endodeoxyribonuclease RuvC from Parasynechococcus marenigrum (strain WH8102).